The chain runs to 885 residues: DNA mismatch repair protein MutS (885 aa).

626–633 (GPNMGGKS) contacts ATP.

This sequence belongs to the DNA mismatch repair MutS family.

In terms of biological role, this protein is involved in the repair of mismatches in DNA. It is possible that it carries out the mismatch recognition step. This protein has a weak ATPase activity. This is DNA mismatch repair protein MutS from Burkholderia orbicola (strain MC0-3).